The chain runs to 519 residues: uncharacterized protein (519 aa).

This sequence belongs to the glycogen phosphorylase family.

This is an uncharacterized protein from Methanocaldococcus jannaschii (strain ATCC 43067 / DSM 2661 / JAL-1 / JCM 10045 / NBRC 100440) (Methanococcus jannaschii).